The primary structure comprises 267 residues: Phosphoethanolamine/phosphocholine phosphatase (267 aa).

D32 serves as the catalytic Nucleophile. The Mg(2+) site is built by D32 and D34. Catalysis depends on D34, which acts as the Proton donor. D43 and D123 together coordinate substrate. Mg(2+) is bound at residue D203.

This sequence belongs to the HAD-like hydrolase superfamily. PHOSPHO family. Requires Mg(2+) as cofactor. As to expression, expressed at sites of mineralization in bone and cartilage. Highly expressed in osteoblast cell line SaOS-2 which produces a mineralized matrix, but not in MG-63 cell line, which do not mineralize.

It localises to the extracellular vesicle. It carries out the reaction phosphoethanolamine + H2O = ethanolamine + phosphate. The catalysed reaction is phosphocholine + H2O = choline + phosphate. Its function is as follows. Phosphatase that has a high activity toward phosphoethanolamine (PEA) and phosphocholine (PCho). Involved in the generation of inorganic phosphate for bone mineralization. Acts in a non-redundant manner with PHOSPHO1 in skeletal mineralization: while PHOSPHO1 mediates the initiation of hydroxyapatite crystallization in the matrix vesicles (MVs), ALPL/TNAP catalyzes the spread of hydroxyapatite crystallization in the extracellular matrix. The polypeptide is Phosphoethanolamine/phosphocholine phosphatase (Homo sapiens (Human)).